Consider the following 686-residue polypeptide: Kinesin light chain (686 aa).

Disordered stretches follow at residues 1-23 (MSGSKLSTPNNSGGGQGNLSQEQ) and 158-204 (KYDE…SVSA). Residues 20–160 (SQEQIITGTR…EYMNSIKKYD (141 aa)) are a coiled coil. TPR repeat units follow at residues 215 to 248 (LRTLHNLVIQYASQSRYEVAVPLCKQALEDLEKT), 257 to 290 (ATMLNILALVYRDQNKYKEAGNLLHDALAIREKT), 299 to 332 (AATLNNLAVLYGKRGKYKEAEPLCKRALEIREKV), 341 to 374 (AKQLNNLALLCQNQGKYEEVEWYYQRALEIYEKK), 383 to 416 (AKTKNNLAAAYLKQGKYKAAETLYKQVLTRAHER), and 472 to 505 (TTTLKNLGALYRRQGKYDAAEILEECAMKSRRNA). Disordered regions lie at residues 520-558 (QDLSTDVPRSEAMAKERHHRRSSGTPRHGSTESVSYEKT) and 586-686 (GYVE…SGNF). The span at 675-686 (DNLSSRRQSGNF) shows a compositional bias: polar residues.

This sequence belongs to the kinesin light chain family. As to quaternary structure, oligomeric complex composed of two heavy chains and two light chains. Phosphorylation may modulate the process of mechanochemical coupling.

Its subcellular location is the cytoplasm. The protein localises to the cytoskeleton. Kinesin is a microtubule-associated force-producing protein that may play a role in organelle transport. The light chain may function in coupling of cargo to the heavy chain or in the modulation of its ATPase activity. The polypeptide is Kinesin light chain (Strongylocentrotus purpuratus (Purple sea urchin)).